The sequence spans 1353 residues: DNA-directed RNA polymerase subunit beta' (1353 aa).

The interval Met-1 to Lys-117 is unknown. A DNA-directed RNA polymerase subunit beta' region spans residues Leu-118 to Asn-1353. Positions 189, 191, 203, and 206 each coordinate Zn(2+). Asp-578, Asp-580, and Asp-582 together coordinate Mg(2+).

Belongs to the RNA polymerase beta' chain family. As to quaternary structure, the RNAP catalytic core consists of 2 alpha, 1 beta, 1 beta' and 1 omega subunit. When a sigma factor is associated with the core the holoenzyme is formed, which can initiate transcription. Mg(2+) is required as a cofactor. Zn(2+) serves as cofactor.

The catalysed reaction is RNA(n) + a ribonucleoside 5'-triphosphate = RNA(n+1) + diphosphate. DNA-dependent RNA polymerase catalyzes the transcription of DNA into RNA using the four ribonucleoside triphosphates as substrates. This Onion yellows phytoplasma (strain OY-M) protein is DNA-directed RNA polymerase subunit beta'.